Consider the following 78-residue polypeptide: U-scoloptoxin(04)-Er1d (78 aa).

Positions 1-24 are cleaved as a signal peptide; it reads MTRHLIFAAMLLVCLFVCWNAVGA. The propeptide occupies 25–28; it reads RDAR.

Belongs to the scoloptoxin-04 family. In terms of processing, contains 2 disulfide bonds. Expressed by the venom gland.

The protein resides in the secreted. The chain is U-scoloptoxin(04)-Er1d from Ethmostigmus rubripes (Giant centipede).